Here is a 158-residue protein sequence, read N- to C-terminus: Transcription elongation factor GreB (158 aa).

Residues Lys-53 to Ile-75 adopt a coiled-coil conformation.

Belongs to the GreA/GreB family. GreB subfamily.

Functionally, necessary for efficient RNA polymerase transcription elongation past template-encoded arresting sites. The arresting sites in DNA have the property of trapping a certain fraction of elongating RNA polymerases that pass through, resulting in locked ternary complexes. Cleavage of the nascent transcript by cleavage factors such as GreA or GreB allows the resumption of elongation from the new 3'terminus. GreB releases sequences of up to 9 nucleotides in length. This chain is Transcription elongation factor GreB, found in Haemophilus influenzae (strain ATCC 51907 / DSM 11121 / KW20 / Rd).